The chain runs to 205 residues: 3-isopropylmalate dehydratase small subunit (205 aa).

It belongs to the LeuD family. LeuD type 1 subfamily. Heterodimer of LeuC and LeuD.

It carries out the reaction (2R,3S)-3-isopropylmalate = (2S)-2-isopropylmalate. The protein operates within amino-acid biosynthesis; L-leucine biosynthesis; L-leucine from 3-methyl-2-oxobutanoate: step 2/4. In terms of biological role, catalyzes the isomerization between 2-isopropylmalate and 3-isopropylmalate, via the formation of 2-isopropylmaleate. This is 3-isopropylmalate dehydratase small subunit from Christiangramia forsetii (strain DSM 17595 / CGMCC 1.15422 / KT0803) (Gramella forsetii).